We begin with the raw amino-acid sequence, 375 residues long: tRNA-specific 2-thiouridylase MnmA (375 aa).

ATP-binding positions include 12–19 (GMSGGVDS) and methionine 38. Residues 98–100 (NPD) are interaction with target base in tRNA. Catalysis depends on cysteine 103, which acts as the Nucleophile. The cysteines at positions 103 and 200 are disulfide-linked. Glycine 127 lines the ATP pocket. The interaction with tRNA stretch occupies residues 150–152 (KDQ). Cysteine 200 functions as the Cysteine persulfide intermediate in the catalytic mechanism. Positions 312 to 313 (RY) are interaction with tRNA.

The protein belongs to the MnmA/TRMU family.

The protein resides in the cytoplasm. The catalysed reaction is S-sulfanyl-L-cysteinyl-[protein] + uridine(34) in tRNA + AH2 + ATP = 2-thiouridine(34) in tRNA + L-cysteinyl-[protein] + A + AMP + diphosphate + H(+). Its function is as follows. Catalyzes the 2-thiolation of uridine at the wobble position (U34) of tRNA, leading to the formation of s(2)U34. This chain is tRNA-specific 2-thiouridylase MnmA, found in Lactobacillus delbrueckii subsp. bulgaricus (strain ATCC BAA-365 / Lb-18).